Here is a 282-residue protein sequence, read N- to C-terminus: Probable protein phosphatase 2C 45 (282 aa).

A PPM-type phosphatase domain is found at 27-272 (SYGYASSPGK…DNITCVVVRF (246 aa)). Positions 63, 64, 224, and 263 each coordinate Mn(2+).

This sequence belongs to the PP2C family. Requires Mg(2+) as cofactor. The cofactor is Mn(2+).

It carries out the reaction O-phospho-L-seryl-[protein] + H2O = L-seryl-[protein] + phosphate. It catalyses the reaction O-phospho-L-threonyl-[protein] + H2O = L-threonyl-[protein] + phosphate. The sequence is that of Probable protein phosphatase 2C 45 from Oryza sativa subsp. japonica (Rice).